The primary structure comprises 308 residues: Porphobilinogen deaminase (308 aa).

S-(dipyrrolylmethanemethyl)cysteine is present on cysteine 241.

It belongs to the HMBS family. In terms of assembly, monomer. It depends on dipyrromethane as a cofactor.

The catalysed reaction is 4 porphobilinogen + H2O = hydroxymethylbilane + 4 NH4(+). Its pathway is porphyrin-containing compound metabolism; protoporphyrin-IX biosynthesis; coproporphyrinogen-III from 5-aminolevulinate: step 2/4. Functionally, tetrapolymerization of the monopyrrole PBG into the hydroxymethylbilane pre-uroporphyrinogen in several discrete steps. This Staphylococcus aureus (strain MSSA476) protein is Porphobilinogen deaminase.